Consider the following 87-residue polypeptide: Phosphocarrier protein HPr (87 aa).

Residues Met-1–Glu-87 form the HPr domain. The active-site Pros-phosphohistidine intermediate; alternate is His-14. The residue at position 14 (His-14) is a Tele-phosphohistidine; alternate. Ser-45 is modified (phosphoserine; by HPrK/P).

It belongs to the HPr family. The form phosphorylated at the tele nitrogen (N(epsilon)2), instead of the expected pros nitrogen (N(delta)1), of His-14 is not able to transfer its phosphoryl group to the B.subtilis EIIA-Glc domain. This form may be inactive in PTS-catalyzed sugar transport or target an as yet unknown acceptor molecule in an alternative metabolic process.

Its subcellular location is the cytoplasm. Phosphorylation on Ser-45 inhibits the phosphoryl transfer from enzyme I to HPr. Functionally, general (non sugar-specific) component of the phosphoenolpyruvate-dependent sugar phosphotransferase system (sugar PTS). This major carbohydrate active-transport system catalyzes the phosphorylation of incoming sugar substrates concomitantly with their translocation across the cell membrane. The phosphoryl group from phosphoenolpyruvate (PEP) is transferred to the phosphoryl carrier protein HPr by enzyme I. Phospho-HPr then transfers it to the PTS EIIA domain. P-Ser-HPr interacts with the catabolite control protein A (CcpA), forming a complex that binds to DNA at the catabolite response elements cre, operator sites preceding a large number of catabolite-regulated genes. Thus, P-Ser-HPr is a corepressor in carbon catabolite repression (CCR), a mechanism that allows bacteria to coordinate and optimize the utilization of available carbon sources. P-Ser-HPr mediates glucose catabolite repression of cry4A toxin expression. This chain is Phosphocarrier protein HPr (ptsH), found in Bacillus thuringiensis subsp. israelensis.